The primary structure comprises 381 residues: Subtilisin NAT (381 aa).

Residues 1 to 29 (MRSKKLWISLLFALTLIFTMAFSNMSAQA) form the signal peptide. Residues 30–106 (AGKSSTEKKY…VEEDHIAHEY (77 aa)) constitute a propeptide that is removed on maturation. The Inhibitor I9 domain occupies 38–103 (KYIVGFKQTM…VAYVEEDHIA (66 aa)). In terms of domain architecture, Peptidase S8 spans 111–380 (PYGISQIKAP…KGLINVQAAA (270 aa)). Asp-138 functions as the Charge relay system in the catalytic mechanism. Asp-147 contributes to the Ca(2+) binding site. The active-site Charge relay system is His-170. Positions 181, 183, 185, 187, 275, 277, 280, and 303 each coordinate Ca(2+). Ser-327 acts as the Charge relay system in catalysis.

Belongs to the peptidase S8 family. Monomer. Ca(2+) serves as cofactor.

The protein resides in the secreted. It catalyses the reaction Hydrolysis of proteins with broad specificity for peptide bonds, and a preference for a large uncharged residue in P1. Hydrolyzes peptide amides.. With respect to regulation, inhibited by PMSF (phenylmethylsulfonyl fluoride). Functionally, subtilisin is an extracellular alkaline serine protease, it catalyzes the hydrolysis of proteins and peptide amides. Subtilisin NAT also has fibrinolytic activity. The sequence is that of Subtilisin NAT from Bacillus subtilis subsp. natto.